We begin with the raw amino-acid sequence, 177 residues long: Large ribosomal subunit protein uL6 (177 aa).

The protein belongs to the universal ribosomal protein uL6 family. As to quaternary structure, part of the 50S ribosomal subunit.

This protein binds to the 23S rRNA, and is important in its secondary structure. It is located near the subunit interface in the base of the L7/L12 stalk, and near the tRNA binding site of the peptidyltransferase center. The sequence is that of Large ribosomal subunit protein uL6 from Natronomonas pharaonis (strain ATCC 35678 / DSM 2160 / CIP 103997 / JCM 8858 / NBRC 14720 / NCIMB 2260 / Gabara) (Halobacterium pharaonis).